The following is a 544-amino-acid chain: Membrane protein insertase YidC (544 aa).

The next 5 membrane-spanning stretches (helical) occupy residues 6–26 (NILLIGLLFVSFLLWQQWQTD), 345–365 (LLMFFQSIVGNWGAAIILITL), 423–443 (GGCLPILLQMPIFIALYWVLL), 460–480 (LSVQDPYYVMPILMGVSMFVM), and 503–523 (VVFTVFFLWFPAGLVLYWLVG).

Belongs to the OXA1/ALB3/YidC family. Type 1 subfamily. In terms of assembly, interacts with the Sec translocase complex via SecD. Specifically interacts with transmembrane segments of nascent integral membrane proteins during membrane integration.

It is found in the cell inner membrane. Its function is as follows. Required for the insertion and/or proper folding and/or complex formation of integral membrane proteins into the membrane. Involved in integration of membrane proteins that insert both dependently and independently of the Sec translocase complex, as well as at least some lipoproteins. Aids folding of multispanning membrane proteins. This chain is Membrane protein insertase YidC, found in Shewanella woodyi (strain ATCC 51908 / MS32).